Consider the following 294-residue polypeptide: tRNA pseudouridine synthase B (294 aa).

Aspartate 39 serves as the catalytic Nucleophile.

This sequence belongs to the pseudouridine synthase TruB family. Type 1 subfamily.

It carries out the reaction uridine(55) in tRNA = pseudouridine(55) in tRNA. In terms of biological role, responsible for synthesis of pseudouridine from uracil-55 in the psi GC loop of transfer RNAs. This is tRNA pseudouridine synthase B from Streptococcus pyogenes serotype M28 (strain MGAS6180).